A 278-amino-acid chain; its full sequence is MPELPEVRVVCKSLNEKVQNLVFKKVEIFNPKLFKEYDPSYFQEFLIGEKILKISNLGKNIIYFLTNNKIMLSHLRMEGKYSFYEQKPKETLKHIQAIFYFENGSELHYRESRPFGTFHIRYLNNYLKIDPLAKVAQSPGEIDFETFYNRLSKKALAIKPTLLDQSIVSGIGNIYADEILFASKIHPATPSNLLSKDKVKEILKNAIEILDKSTELGGSSINSYESLNKKEGQYQNFLKVHTKKGEFCIKCSSKIEKIKFKGRGTYFCPTCQKQKDFI.

The active-site Schiff-base intermediate with DNA is the proline 2. The active-site Proton donor is glutamate 3. The active-site Proton donor; for beta-elimination activity is the lysine 59. Positions 94, 113, and 154 each coordinate DNA. The FPG-type zinc finger occupies 239 to 273 (KVHTKKGEFCIKCSSKIEKIKFKGRGTYFCPTCQK). Arginine 263 serves as the catalytic Proton donor; for delta-elimination activity.

The protein belongs to the FPG family. In terms of assembly, monomer. The cofactor is Zn(2+).

The catalysed reaction is Hydrolysis of DNA containing ring-opened 7-methylguanine residues, releasing 2,6-diamino-4-hydroxy-5-(N-methyl)formamidopyrimidine.. The enzyme catalyses 2'-deoxyribonucleotide-(2'-deoxyribose 5'-phosphate)-2'-deoxyribonucleotide-DNA = a 3'-end 2'-deoxyribonucleotide-(2,3-dehydro-2,3-deoxyribose 5'-phosphate)-DNA + a 5'-end 5'-phospho-2'-deoxyribonucleoside-DNA + H(+). Involved in base excision repair of DNA damaged by oxidation or by mutagenic agents. Acts as a DNA glycosylase that recognizes and removes damaged bases. Has a preference for oxidized purines, such as 7,8-dihydro-8-oxoguanine (8-oxoG). Has AP (apurinic/apyrimidinic) lyase activity and introduces nicks in the DNA strand. Cleaves the DNA backbone by beta-delta elimination to generate a single-strand break at the site of the removed base with both 3'- and 5'-phosphates. In Mycoplasmopsis pulmonis (strain UAB CTIP) (Mycoplasma pulmonis), this protein is Formamidopyrimidine-DNA glycosylase (mutM).